Here is a 132-residue protein sequence, read N- to C-terminus: D-ribose pyranase (132 aa).

Residue histidine 20 is the Proton donor of the active site. Residues aspartate 28, histidine 99, and 121-123 (YAN) each bind substrate.

It belongs to the RbsD / FucU family. RbsD subfamily. Homodecamer.

The protein localises to the cytoplasm. The enzyme catalyses beta-D-ribopyranose = beta-D-ribofuranose. It functions in the pathway carbohydrate metabolism; D-ribose degradation; D-ribose 5-phosphate from beta-D-ribopyranose: step 1/2. Its function is as follows. Catalyzes the interconversion of beta-pyran and beta-furan forms of D-ribose. In Chromobacterium violaceum (strain ATCC 12472 / DSM 30191 / JCM 1249 / CCUG 213 / NBRC 12614 / NCIMB 9131 / NCTC 9757 / MK), this protein is D-ribose pyranase.